The chain runs to 185 residues: MNQLIISAATEGAAEANPLVPNVWEMGVVLVGFAVLMYIVVKFVVPMFEKTFAERAEAIEGGIAKAEAAQAEASAALEEYKQQLTDARAEANRIREEARAEGAQILADLKAKAAAESARITEQAHAAIESERQAAVVSLRSEVGTLATTLAGRIVGEALTDDQRAARVVDRFLADLETQSAGAAK.

The chain crosses the membrane as a helical span at residues 28–48; that stretch reads VVLVGFAVLMYIVVKFVVPMF.

Belongs to the ATPase B chain family. In terms of assembly, F-type ATPases have 2 components, F(1) - the catalytic core - and F(0) - the membrane proton channel. F(1) has five subunits: alpha(3), beta(3), gamma(1), delta(1), epsilon(1). F(0) has three main subunits: a(1), b(2) and c(10-14). The alpha and beta chains form an alternating ring which encloses part of the gamma chain. F(1) is attached to F(0) by a central stalk formed by the gamma and epsilon chains, while a peripheral stalk is formed by the delta and b chains.

Its subcellular location is the cell membrane. In terms of biological role, f(1)F(0) ATP synthase produces ATP from ADP in the presence of a proton or sodium gradient. F-type ATPases consist of two structural domains, F(1) containing the extramembraneous catalytic core and F(0) containing the membrane proton channel, linked together by a central stalk and a peripheral stalk. During catalysis, ATP synthesis in the catalytic domain of F(1) is coupled via a rotary mechanism of the central stalk subunits to proton translocation. Its function is as follows. Component of the F(0) channel, it forms part of the peripheral stalk, linking F(1) to F(0). The protein is ATP synthase subunit b of Paenarthrobacter aurescens (strain TC1).